A 473-amino-acid chain; its full sequence is ATP synthase subunit beta (473 aa).

158-165 contacts ATP; it reads GGAGVGKT.

This sequence belongs to the ATPase alpha/beta chains family. In terms of assembly, F-type ATPases have 2 components, CF(1) - the catalytic core - and CF(0) - the membrane proton channel. CF(1) has five subunits: alpha(3), beta(3), gamma(1), delta(1), epsilon(1). CF(0) has three main subunits: a(1), b(2) and c(9-12). The alpha and beta chains form an alternating ring which encloses part of the gamma chain. CF(1) is attached to CF(0) by a central stalk formed by the gamma and epsilon chains, while a peripheral stalk is formed by the delta and b chains.

The protein resides in the cell membrane. The catalysed reaction is ATP + H2O + 4 H(+)(in) = ADP + phosphate + 5 H(+)(out). In terms of biological role, produces ATP from ADP in the presence of a proton gradient across the membrane. The catalytic sites are hosted primarily by the beta subunits. The sequence is that of ATP synthase subunit beta from Bacillus sp. (strain PS3).